The primary structure comprises 488 residues: Cobyric acid synthase (488 aa).

The region spanning 248-441 (VLRVVVPALP…VHGLFDAPDA (194 aa)) is the GATase cobBQ-type domain. The Nucleophile role is filled by Cys-328. His-433 is an active-site residue.

Belongs to the CobB/CobQ family. CobQ subfamily.

The protein operates within cofactor biosynthesis; adenosylcobalamin biosynthesis. In terms of biological role, catalyzes amidations at positions B, D, E, and G on adenosylcobyrinic A,C-diamide. NH(2) groups are provided by glutamine, and one molecule of ATP is hydrogenolyzed for each amidation. The polypeptide is Cobyric acid synthase (Burkholderia ambifaria (strain ATCC BAA-244 / DSM 16087 / CCUG 44356 / LMG 19182 / AMMD) (Burkholderia cepacia (strain AMMD))).